The following is a 157-amino-acid chain: Transcription elongation factor GreA (157 aa).

This sequence belongs to the GreA/GreB family.

In terms of biological role, necessary for efficient RNA polymerase transcription elongation past template-encoded arresting sites. The arresting sites in DNA have the property of trapping a certain fraction of elongating RNA polymerases that pass through, resulting in locked ternary complexes. Cleavage of the nascent transcript by cleavage factors such as GreA or GreB allows the resumption of elongation from the new 3'terminus. GreA releases sequences of 2 to 3 nucleotides. This Caulobacter vibrioides (strain ATCC 19089 / CIP 103742 / CB 15) (Caulobacter crescentus) protein is Transcription elongation factor GreA.